The following is a 310-amino-acid chain: Homoserine kinase (310 aa).

Proline 91–cysteine 101 lines the ATP pocket.

This sequence belongs to the GHMP kinase family. Homoserine kinase subfamily.

It localises to the cytoplasm. The enzyme catalyses L-homoserine + ATP = O-phospho-L-homoserine + ADP + H(+). The protein operates within amino-acid biosynthesis; L-threonine biosynthesis; L-threonine from L-aspartate: step 4/5. Functionally, catalyzes the ATP-dependent phosphorylation of L-homoserine to L-homoserine phosphate. The polypeptide is Homoserine kinase (Sodalis glossinidius (strain morsitans)).